The chain runs to 681 residues: Minichromosome maintenance domain-containing protein 2 (681 aa).

A Phosphoserine modification is found at S292. Residues 533 to 621 (RQFTTEDFEK…LIAALLFETS (89 aa)) enclose the MCM domain.

Plays an important role in meiotic recombination and associated DNA double-strand break repair. The protein is Minichromosome maintenance domain-containing protein 2 (MCMDC2) of Homo sapiens (Human).